We begin with the raw amino-acid sequence, 272 residues long: NH(3)-dependent NAD(+) synthetase (272 aa).

Position 45–52 (45–52) interacts with ATP; the sequence is GISGGQDS. Asp51 contributes to the Mg(2+) binding site. Arg138 contacts deamido-NAD(+). Residue Thr158 coordinates ATP. Mg(2+) is bound at residue Glu163. Deamido-NAD(+)-binding residues include Lys171 and Asp178. 2 residues coordinate ATP: Lys187 and Thr209. 258 to 259 lines the deamido-NAD(+) pocket; that stretch reads HK.

It belongs to the NAD synthetase family. In terms of assembly, homodimer.

It catalyses the reaction deamido-NAD(+) + NH4(+) + ATP = AMP + diphosphate + NAD(+) + H(+). It participates in cofactor biosynthesis; NAD(+) biosynthesis; NAD(+) from deamido-NAD(+) (ammonia route): step 1/1. In terms of biological role, catalyzes the ATP-dependent amidation of deamido-NAD to form NAD. Uses ammonia as a nitrogen source. This Bacillus cereus (strain ATCC 14579 / DSM 31 / CCUG 7414 / JCM 2152 / NBRC 15305 / NCIMB 9373 / NCTC 2599 / NRRL B-3711) protein is NH(3)-dependent NAD(+) synthetase.